A 245-amino-acid chain; its full sequence is 1-(5-phosphoribosyl)-5-[(5-phosphoribosylamino)methylideneamino] imidazole-4-carboxamide isomerase (245 aa).

Residue D8 is the Proton acceptor of the active site. The active-site Proton donor is the D130.

Belongs to the HisA/HisF family.

It is found in the cytoplasm. The enzyme catalyses 1-(5-phospho-beta-D-ribosyl)-5-[(5-phospho-beta-D-ribosylamino)methylideneamino]imidazole-4-carboxamide = 5-[(5-phospho-1-deoxy-D-ribulos-1-ylimino)methylamino]-1-(5-phospho-beta-D-ribosyl)imidazole-4-carboxamide. The protein operates within amino-acid biosynthesis; L-histidine biosynthesis; L-histidine from 5-phospho-alpha-D-ribose 1-diphosphate: step 4/9. This chain is 1-(5-phosphoribosyl)-5-[(5-phosphoribosylamino)methylideneamino] imidazole-4-carboxamide isomerase, found in Pseudomonas fluorescens (strain ATCC BAA-477 / NRRL B-23932 / Pf-5).